A 406-amino-acid chain; its full sequence is Argininosuccinate synthase (406 aa).

ATP contacts are provided by residues 12–20 (AYSGGLDTS) and A40. Residues Y92 and S97 each contribute to the L-citrulline site. Residue G122 participates in ATP binding. Residues T124, N128, and D129 each coordinate L-aspartate. Position 128 (N128) interacts with L-citrulline. R132, S181, S190, E266, and Y278 together coordinate L-citrulline.

Belongs to the argininosuccinate synthase family. Type 1 subfamily. Homotetramer.

Its subcellular location is the cytoplasm. The catalysed reaction is L-citrulline + L-aspartate + ATP = 2-(N(omega)-L-arginino)succinate + AMP + diphosphate + H(+). It functions in the pathway amino-acid biosynthesis; L-arginine biosynthesis; L-arginine from L-ornithine and carbamoyl phosphate: step 2/3. This is Argininosuccinate synthase from Serratia proteamaculans (strain 568).